Consider the following 219-residue polypeptide: ATP-dependent Clp protease proteolytic subunit (219 aa).

Ser101 (nucleophile) is an active-site residue. The active site involves His126.

Belongs to the peptidase S14 family. Component of the chloroplastic Clp protease core complex.

It is found in the plastid. It localises to the chloroplast stroma. It catalyses the reaction Hydrolysis of proteins to small peptides in the presence of ATP and magnesium. alpha-casein is the usual test substrate. In the absence of ATP, only oligopeptides shorter than five residues are hydrolyzed (such as succinyl-Leu-Tyr-|-NHMec, and Leu-Tyr-Leu-|-Tyr-Trp, in which cleavage of the -Tyr-|-Leu- and -Tyr-|-Trp bonds also occurs).. Its function is as follows. Cleaves peptides in various proteins in a process that requires ATP hydrolysis. Has a chymotrypsin-like activity. Plays a major role in the degradation of misfolded proteins. The sequence is that of ATP-dependent Clp protease proteolytic subunit from Chara vulgaris (Common stonewort).